The following is a 401-amino-acid chain: Imidazolonepropionase (401 aa).

Residues H66 and H68 each contribute to the Fe(3+) site. Zn(2+) is bound by residues H66 and H68. 3 residues coordinate 4-imidazolone-5-propanoate: R75, Y138, and H171. Y138 is a binding site for N-formimidoyl-L-glutamate. H236 contributes to the Fe(3+) binding site. Zn(2+) is bound at residue H236. Q239 provides a ligand contact to 4-imidazolone-5-propanoate. D311 is a binding site for Fe(3+). D311 contributes to the Zn(2+) binding site. N-formimidoyl-L-glutamate contacts are provided by N313 and G315. T316 contacts 4-imidazolone-5-propanoate.

The protein belongs to the metallo-dependent hydrolases superfamily. HutI family. Zn(2+) is required as a cofactor. The cofactor is Fe(3+).

It is found in the cytoplasm. It carries out the reaction 4-imidazolone-5-propanoate + H2O = N-formimidoyl-L-glutamate. Its pathway is amino-acid degradation; L-histidine degradation into L-glutamate; N-formimidoyl-L-glutamate from L-histidine: step 3/3. In terms of biological role, catalyzes the hydrolytic cleavage of the carbon-nitrogen bond in imidazolone-5-propanoate to yield N-formimidoyl-L-glutamate. It is the third step in the universal histidine degradation pathway. The protein is Imidazolonepropionase of Pseudomonas entomophila (strain L48).